A 348-amino-acid polypeptide reads, in one-letter code: Dihydroorotase (348 aa).

2 residues coordinate Zn(2+): H17 and H19. Residues H19–R21 and N45 contribute to the substrate site. Zn(2+) contacts are provided by K103, H140, and H178. K103 carries the post-translational modification N6-carboxylysine. A substrate-binding site is contributed by H140. L223 lines the substrate pocket. Residue D251 coordinates Zn(2+). Residue D251 is part of the active site. The substrate site is built by H255 and A267.

This sequence belongs to the metallo-dependent hydrolases superfamily. DHOase family. Class II DHOase subfamily. Homodimer. The cofactor is Zn(2+).

It catalyses the reaction (S)-dihydroorotate + H2O = N-carbamoyl-L-aspartate + H(+). It participates in pyrimidine metabolism; UMP biosynthesis via de novo pathway; (S)-dihydroorotate from bicarbonate: step 3/3. Catalyzes the reversible cyclization of carbamoyl aspartate to dihydroorotate. This chain is Dihydroorotase, found in Escherichia coli O6:H1 (strain CFT073 / ATCC 700928 / UPEC).